The sequence spans 306 residues: GTP-binding protein RAD (306 aa).

Gly residues predominate over residues 1–13 (MTLNGGSGAGGSR). Positions 1-91 (MTLNGGSGAG…GDSGSEDGVY (91 aa)) are disordered. Arg23 is modified (omega-N-methylarginine). Residue Ser25 is modified to Phosphoserine. The segment covering 56–88 (AATAAGTRTQGQRLDWPEGSSDSLSSGDSGSED) has biased composition (low complexity). GTP is bound by residues 97 to 104 (GAPGVGKS) and 201 to 204 (NKSD). The calmodulin-binding stretch occupies residues 276 to 295 (AKLFLGRIVARNSRKMAFLA).

Belongs to the small GTPase superfamily. RGK family. Interacts with Calmodulin preferentially in the inactive, GDP-bound form. Interacts with CAMK2D. Interacts with CACNB2; interaction may be involved in beta-adrenergic regulation of heart rate and contractile force. Interaction with CACNB2 regulates the trafficking of CACNA1C to the cell membrane.

It localises to the cell membrane. Its function is as follows. May regulate basal voltage-dependent L-type Ca(2+) currents and be required for beta-adrenergic augmentation of Ca(2+) influx in cardiomyocytes, thereby regulating increases in heart rate and contractile force. May play an important role in cardiac antiarrhythmia via the strong suppression of voltage-dependent L-type Ca(2+) currents. Regulates voltage-gated L-type calcium channel subunit alpha-1C trafficking to the cell membrane. Inhibits cardiac hypertrophy through the calmodulin-dependent kinase II (CaMKII) pathway. Inhibits phosphorylation and activation of CAMK2D. This is GTP-binding protein RAD (Rrad) from Rattus norvegicus (Rat).